The chain runs to 61 residues: Large ribosomal subunit protein uL30 (61 aa).

It belongs to the universal ribosomal protein uL30 family. In terms of assembly, part of the 50S ribosomal subunit.

This Latilactobacillus sakei subsp. sakei (strain 23K) (Lactobacillus sakei subsp. sakei) protein is Large ribosomal subunit protein uL30.